A 111-amino-acid polypeptide reads, in one-letter code: RNA polymerase-binding protein RbpA (111 aa).

The protein belongs to the RNA polymerase-binding protein RbpA family. As to quaternary structure, forms a complex with the RNAP catalytic core and with free principal sigma factors.

Functionally, binds to RNA polymerase (RNAP), stimulating transcription from principal, but not alternative sigma factor promoters. This chain is RNA polymerase-binding protein RbpA, found in Mycobacterium tuberculosis (strain CDC 1551 / Oshkosh).